Reading from the N-terminus, the 310-residue chain is Methionyl-tRNA formyltransferase (310 aa).

Position 110–113 (110–113 (SLLP)) interacts with (6S)-5,6,7,8-tetrahydrofolate.

This sequence belongs to the Fmt family.

It catalyses the reaction L-methionyl-tRNA(fMet) + (6R)-10-formyltetrahydrofolate = N-formyl-L-methionyl-tRNA(fMet) + (6S)-5,6,7,8-tetrahydrofolate + H(+). Its function is as follows. Attaches a formyl group to the free amino group of methionyl-tRNA(fMet). The formyl group appears to play a dual role in the initiator identity of N-formylmethionyl-tRNA by promoting its recognition by IF2 and preventing the misappropriation of this tRNA by the elongation apparatus. The protein is Methionyl-tRNA formyltransferase of Streptomyces griseus subsp. griseus (strain JCM 4626 / CBS 651.72 / NBRC 13350 / KCC S-0626 / ISP 5235).